The primary structure comprises 1356 residues: Transmembrane protein 94 (1356 aa).

Over 1-64 (MDLKEKHLGE…FLHHSNRCSC (64 aa)) the chain is Cytoplasmic. Residues 65–85 (FHWPGASLMLLAVLLLLGCCG) traverse the membrane as a helical segment. Residues 86 to 92 (GQPAGSR) are Lumenal-facing. Residues 93–113 (GVGLVNASALFLLLLLNLVLI) traverse the membrane as a helical segment. Over 114 to 273 (GRQDRLKRRE…RPVTALDNER (160 aa)) the chain is Cytoplasmic. Serine 221 and serine 225 each carry phosphoserine. A helical transmembrane segment spans residues 274 to 294 (FTVQSVMLHYAVPVVLAGFLI). The Lumenal portion of the chain corresponds to 295 to 320 (TNALRFIFSAPGVTSWQYTLLQLQVN). The helical transmembrane segment at 321 to 341 (GVLPILPLLFPVLWVLATACG) threads the bilayer. Over 342-1092 (EARVLAQMSK…RHATYGIRKC (751 aa)) the chain is Cytoplasmic. Positions 417–422 (DKQGIL) match the DKQGIL motif. Disordered regions lie at residues 439–461 (VEPP…FCHP) and 483–541 (EQER…ESDP). The span at 440–449 (EPPHSSHEDL) shows a compositional bias: basic and acidic residues. Phosphoserine occurs at positions 444, 445, and 454. A compositionally biased stretch (basic residues) spans 502-511 (HHKAHGRSKH). Residues serine 513, serine 518, serine 798, and serine 941 each carry the phosphoserine modification. A helical transmembrane segment spans residues 1093–1113 (FLFLLQCQLTLVVIQFLSCLV). Topologically, residues 1114 to 1120 (QLPPLLS) are lumenal. Residues 1121–1141 (TTDILWLSCFCYPLLSISLLG) traverse the membrane as a helical segment. The Cytoplasmic portion of the chain corresponds to 1142 to 1167 (KPPHSSIMSMATGKNLQSIPKKTQHY). Residues 1168 to 1188 (FLLCFLLKFSLTISSCLICFG) form a helical membrane-spanning segment. Residues 1189–1228 (FTLQSFCDSSRDRNLTNCSSVMLPSNDDRAPAWFEDFANG) are Lumenal-facing. Residues asparagine 1202 and asparagine 1205 are each glycosylated (N-linked (GlcNAc...) asparagine). The helical transmembrane segment at 1229–1249 (LLSAQKLTAALIVLHTVFISI) threads the bilayer. The Cytoplasmic segment spans residues 1250 to 1261 (THVHRTKPLWRK). The chain crosses the membrane as a helical span at residues 1262–1282 (SPLTNLWWAVTVPVVLLGQVV). Residues 1283 to 1306 (QTAVDLQLWTHRDSHVHFGLEDVP) are Lumenal-facing. A helical transmembrane segment spans residues 1307 to 1327 (LLTWLLGCLSLVLVVVTNEIV). The Cytoplasmic segment spans residues 1328–1356 (KLHEIRVRVRYQKRQKLQFETKLGMNSPF). The GMN; metal-binding motif motif lies at 1351–1353 (GMN).

As to quaternary structure, forms homooligomers. Expressed ubiquitously.

It is found in the endoplasmic reticulum membrane. Functionally, could function in the uptake of Mg(2+) from the cytosol into the endoplasmic reticulum and regulate intracellular Mg(2+) homeostasis. The sequence is that of Transmembrane protein 94 from Homo sapiens (Human).